Here is a 251-residue protein sequence, read N- to C-terminus: 3-deoxy-manno-octulosonate cytidylyltransferase (251 aa).

Belongs to the KdsB family.

Its subcellular location is the cytoplasm. It catalyses the reaction 3-deoxy-alpha-D-manno-oct-2-ulosonate + CTP = CMP-3-deoxy-beta-D-manno-octulosonate + diphosphate. It participates in nucleotide-sugar biosynthesis; CMP-3-deoxy-D-manno-octulosonate biosynthesis; CMP-3-deoxy-D-manno-octulosonate from 3-deoxy-D-manno-octulosonate and CTP: step 1/1. The protein operates within bacterial outer membrane biogenesis; lipopolysaccharide biosynthesis. Its function is as follows. Activates KDO (a required 8-carbon sugar) for incorporation into bacterial lipopolysaccharide in Gram-negative bacteria. This chain is 3-deoxy-manno-octulosonate cytidylyltransferase, found in Brucella abortus (strain 2308).